The following is a 443-amino-acid chain: Thymidine phosphorylase (443 aa).

This sequence belongs to the thymidine/pyrimidine-nucleoside phosphorylase family. In terms of assembly, homodimer.

It carries out the reaction thymidine + phosphate = 2-deoxy-alpha-D-ribose 1-phosphate + thymine. It functions in the pathway pyrimidine metabolism; dTMP biosynthesis via salvage pathway; dTMP from thymine: step 1/2. In terms of biological role, the enzymes which catalyze the reversible phosphorolysis of pyrimidine nucleosides are involved in the degradation of these compounds and in their utilization as carbon and energy sources, or in the rescue of pyrimidine bases for nucleotide synthesis. This is Thymidine phosphorylase from Shewanella sp. (strain MR-7).